A 267-amino-acid chain; its full sequence is Hydroxynaphthalene reductase-like protein Arp2 (267 aa).

NADP(+) is bound by residues isoleucine 25, asparagine 45, aspartate 71, and asparagine 98. Residues serine 147 and serine 148 each act as proton donor in the active site. 4 residues coordinate NADP(+): tyrosine 162, lysine 166, valine 195, and threonine 197. Residue tyrosine 162 is the Proton acceptor of the active site. Residue lysine 166 is the Lowers pKa of active site Tyr of the active site.

The protein belongs to the short-chain dehydrogenases/reductases (SDR) family.

Hydroxynaphthalene reductase-like protein; part of the Pks2 gene cluster that mediates the formation of infectious structures (appressoria), enabling these fungi to kill insects faster. The product of the Pks2 gene cluster is different from the one of Pks1 and has still not been identified. This is Hydroxynaphthalene reductase-like protein Arp2 from Metarhizium majus (strain ARSEF 297).